A 247-amino-acid polypeptide reads, in one-letter code: Cell division protein ZapD (247 aa).

The protein belongs to the ZapD family. Interacts with FtsZ.

It localises to the cytoplasm. Functionally, cell division factor that enhances FtsZ-ring assembly. Directly interacts with FtsZ and promotes bundling of FtsZ protofilaments, with a reduction in FtsZ GTPase activity. This Escherichia fergusonii (strain ATCC 35469 / DSM 13698 / CCUG 18766 / IAM 14443 / JCM 21226 / LMG 7866 / NBRC 102419 / NCTC 12128 / CDC 0568-73) protein is Cell division protein ZapD.